Consider the following 305-residue polypeptide: Polyamine aminopropyltransferase 2 (305 aa).

The region spanning 7–242 (WRFVAEWTSE…GLWGFVAASD (236 aa)) is the PABS domain. S-methyl-5'-thioadenosine is bound at residue Gln36. The spermidine site is built by His67 and Glu91. S-methyl-5'-thioadenosine-binding positions include Asp111 and 143–144 (DG). Asp161 (proton acceptor) is an active-site residue. Pro170 lines the S-methyl-5'-thioadenosine pocket.

This sequence belongs to the spermidine/spermine synthase family. In terms of assembly, homodimer or homotetramer.

Its subcellular location is the cytoplasm. It carries out the reaction S-adenosyl 3-(methylsulfanyl)propylamine + propane-1,3-diamine = norspermidine + S-methyl-5'-thioadenosine + H(+). Its function is as follows. Involved in the biosynthesis of polyamines which are thought to support the growth of thermophilic microorganisms under high-temperature conditions. It seems that long-chain and branched-chain of polyamines effectively stabilize DNA and RNA, respectively. Catalyzes the irreversible transfer of a propylamine group from the amino donor S-adenosylmethioninamine (decarboxy-AdoMet) to 1,3-diaminopropane to yield sym-norspermidine (bis(3-aminopropyl)amine). It can also synthesize thermospermine from spermidine with a very low activity. This Hyperthermus butylicus (strain DSM 5456 / JCM 9403 / PLM1-5) protein is Polyamine aminopropyltransferase 2.